The sequence spans 192 residues: Xanthine phosphoribosyltransferase (192 aa).

Residues leucine 20 and asparagine 27 each coordinate xanthine. 5-phospho-alpha-D-ribose 1-diphosphate is bound at residue 128-132 (ANGDA). Xanthine is bound at residue lysine 156.

It belongs to the purine/pyrimidine phosphoribosyltransferase family. Xpt subfamily. In terms of assembly, homodimer.

It localises to the cytoplasm. It carries out the reaction XMP + diphosphate = xanthine + 5-phospho-alpha-D-ribose 1-diphosphate. It functions in the pathway purine metabolism; XMP biosynthesis via salvage pathway; XMP from xanthine: step 1/1. Converts the preformed base xanthine, a product of nucleic acid breakdown, to xanthosine 5'-monophosphate (XMP), so it can be reused for RNA or DNA synthesis. This chain is Xanthine phosphoribosyltransferase, found in Staphylococcus aureus (strain JH1).